A 337-amino-acid polypeptide reads, in one-letter code: Probable dihydroorotase (337 aa).

H12, H14, K95, H132, H170, and D240 together coordinate Zn(2+). K95 is modified (N6-carboxylysine).

It belongs to the metallo-dependent hydrolases superfamily. DHOase family. Class II DHOase subfamily. Zn(2+) serves as cofactor.

The enzyme catalyses (S)-dihydroorotate + H2O = N-carbamoyl-L-aspartate + H(+). It participates in pyrimidine metabolism; UMP biosynthesis via de novo pathway; (S)-dihydroorotate from bicarbonate: step 3/3. This Schizosaccharomyces pombe (strain 972 / ATCC 24843) (Fission yeast) protein is Probable dihydroorotase (ura2).